We begin with the raw amino-acid sequence, 149 residues long: CCAAT/enhancer-binding protein gamma (149 aa).

Over residues 1–12 (MSKVSQQNSTPG) the composition is skewed to polar residues. The tract at residues 1 to 92 (MSKVSQQNST…SKQKAQDTLQ (92 aa)) is disordered. A Glycyl lysine isopeptide (Lys-Gly) (interchain with G-Cter in SUMO2) cross-link involves residue Lys-3. A compositionally biased stretch (low complexity) spans 28–37 (LQQVPQLVPA). The span at 56–72 (SPMDRNSDEYRQRRERN) shows a compositional bias: basic and acidic residues. A bZIP domain is found at 62–125 (SDEYRQRRER…SVLKDLFLEH (64 aa)). The segment at 66-93 (RQRRERNNMAVKKSRLKSKQKAQDTLQR) is basic motif. The leucine-zipper stretch occupies residues 97 to 118 (LKEENERLEAKIKLLTKELSVL). Residues 128 to 149 (NLADNVQPSSTENTTNPDKAGQ) are disordered. Residues 131 to 149 (DNVQPSSTENTTNPDKAGQ) show a composition bias toward polar residues.

This sequence belongs to the bZIP family. C/EBP subfamily. In terms of assembly, binds DNA as a dimer and can form stable heterodimers with CEBPA and CEBPB. Interacts with ZNF638; this interaction increases transcriptional activation.

It is found in the nucleus. Its function is as follows. Transcription factor that binds to the promoter and the enhancer regions of target genes. Binds to the enhancer element PRE-I (positive regulatory element-I) of the IL-4 gene. Binds to the promoter and the enhancer of the immunoglobulin heavy chain. Binds to GPE1, a cis-acting element in the G-CSF gene promoter. This Bos taurus (Bovine) protein is CCAAT/enhancer-binding protein gamma (CEBPG).